We begin with the raw amino-acid sequence, 265 residues long: Vegetative storage protein 2 (265 aa).

A signal peptide spans 1–18; that stretch reads MKILSLSLLLLLAATVSA. N-linked (GlcNAc...) asparagine glycosylation is found at Asn-110, Asn-188, and Asn-210.

It belongs to the APS1/VSP family. In terms of tissue distribution, highly expressed in flowers, but also found in leaves, vegetative shoots, petioles, peduncles, and receptacles of floral organs.

May function as somatic storage protein during early seedling development. The chain is Vegetative storage protein 2 (VSP2) from Arabidopsis thaliana (Mouse-ear cress).